Reading from the N-terminus, the 273-residue chain is Ribosomal RNA small subunit methyltransferase A (273 aa).

Residues asparagine 18, leucine 20, glycine 45, glutamate 66, aspartate 91, and asparagine 113 each coordinate S-adenosyl-L-methionine.

This sequence belongs to the class I-like SAM-binding methyltransferase superfamily. rRNA adenine N(6)-methyltransferase family. RsmA subfamily.

Its subcellular location is the cytoplasm. It catalyses the reaction adenosine(1518)/adenosine(1519) in 16S rRNA + 4 S-adenosyl-L-methionine = N(6)-dimethyladenosine(1518)/N(6)-dimethyladenosine(1519) in 16S rRNA + 4 S-adenosyl-L-homocysteine + 4 H(+). Its function is as follows. Specifically dimethylates two adjacent adenosines (A1518 and A1519) in the loop of a conserved hairpin near the 3'-end of 16S rRNA in the 30S particle. May play a critical role in biogenesis of 30S subunits. This Salmonella agona (strain SL483) protein is Ribosomal RNA small subunit methyltransferase A.